Reading from the N-terminus, the 123-residue chain is Histone H2B (123 aa).

The segment at M1–R30 is disordered. At P2 the chain carries N-methylproline; partial. K44 bears the N6-succinyllysine mark. The O-linked (GlcNAc) serine glycan is linked to S110. N6-succinyllysine is present on residues K114 and K118. Residue K118 forms a Glycyl lysine isopeptide (Lys-Gly) (interchain with G-Cter in ubiquitin) linkage.

This sequence belongs to the histone H2B family. In terms of assembly, the nucleosome is a histone octamer containing two molecules each of H2A, H2B, H3 and H4 assembled in one H3-H4 heterotetramer and two H2A-H2B heterodimers. The octamer wraps approximately 147 bp of DNA. In terms of processing, phosphorylated by the catalytic component of the Dbf4-dependent kinase (DDK) complex Cdc7. Monoubiquitination of Lys-118 by Bre1 gives a specific tag for epigenetic transcriptional activation and is also prerequisite for histone H3 'Lys-4' and 'Lys-79' methylation. Deubiquitination of Lys-118 by the SAGA complex is involved in activating transcription of a large subset of genes. Post-translationally, methylation at Pro-2 increases upon heat shock. In terms of processing, glcNAcylation at Ser-110 promotes monoubiquitination of Lys-118. It fluctuates in response to extracellular glucose, and associates with transcribed genes.

It is found in the nucleus. The protein resides in the chromosome. In terms of biological role, core component of nucleosome. Nucleosomes wrap and compact DNA into chromatin, limiting DNA accessibility to the cellular machineries which require DNA as a template. Histones thereby play a central role in transcription regulation, DNA repair, DNA replication and chromosomal stability. DNA accessibility is regulated via a complex set of post-translational modifications of histones, also called histone code, and nucleosome remodeling. The polypeptide is Histone H2B (His2B) (Drosophila yakuba (Fruit fly)).